The primary structure comprises 205 residues: MSRSRSAAASSSQKPDDMDLMSPDGSASSPSAPNTPATNSGGFSSDRKKATHLRCERQRREAINSGYSDLKDLIPQTTTSLGCKTTNAAILFRACDFMSQLKTDISDADKQLAQLNAQAAALEMIASEYEQMASSVPDAGQSTIQVKMLQLLLDDCFTSFSSQVDFTTYATITRTLLSWVESLAPNAEPFKSTAGKMVTMPFTSP.

2 stretches are compositionally biased toward low complexity: residues 1–12 (MSRSRSAAASSS) and 26–40 (SASSPSAPNTPATNS). Residues 1–58 (MSRSRSAAASSSQKPDDMDLMSPDGSASSPSAPNTPATNSGGFSSDRKKATHLRCERQ) are disordered. Residues 45 to 58 (SDRKKATHLRCERQ) are compositionally biased toward basic and acidic residues. A basic motif region spans residues 47-60 (RKKATHLRCERQRR). A bHLH domain is found at 47 to 101 (RKKATHLRCERQRREAINSGYSDLKDLIPQTTTSLGCKTTNAAILFRACDFMSQL). The segment at 61 to 101 (EAINSGYSDLKDLIPQTTTSLGCKTTNAAILFRACDFMSQL) is helix-loop-helix motif. A coiled-coil region spans residues 98 to 132 (MSQLKTDISDADKQLAQLNAQAAALEMIASEYEQM).

Widely expressed.

The protein resides in the nucleus. The protein localises to the cytoplasm. Its subcellular location is the mitochondrion. In terms of biological role, transcription factor. Binds to the E box motif 5'-CACGTG-3', probably in a heterodimeric complex with mml-1. Involved in modulating longevity in response to TOR signaling, dietary restriction, the decline in protein homeostasis associated with normal aging, germline signaling and the insulin-like signaling pathway. Plays a role in autophagy. Involved in regulating migration of the ray 1 precursor cells in the male tail, acting in concert with Wnt and semaphorin signaling pathways. Regulates transcription of genes encoding extracellular matrix (ECM) components which may contribute to the substratum required for migration of the neighboring ray 1 precursor cells. Required for resistance to oxidative stress. Involved in promoting infection by the microsporidian pathogen N.parisii, probably acting independently of its canonical partner, mml-1. The polypeptide is Max-like protein homolog 2 (Caenorhabditis elegans).